The sequence spans 446 residues: Glutamyl-tRNA reductase (446 aa).

Residues 49 to 52, S109, 114 to 116, and Q120 each bind substrate; these read TCNR and ETQ. The active-site Nucleophile is C50. 189–194 contacts NADP(+); sequence GAGKMG.

This sequence belongs to the glutamyl-tRNA reductase family. In terms of assembly, homodimer.

The enzyme catalyses (S)-4-amino-5-oxopentanoate + tRNA(Glu) + NADP(+) = L-glutamyl-tRNA(Glu) + NADPH + H(+). Its pathway is porphyrin-containing compound metabolism; protoporphyrin-IX biosynthesis; 5-aminolevulinate from L-glutamyl-tRNA(Glu): step 1/2. In terms of biological role, catalyzes the NADPH-dependent reduction of glutamyl-tRNA(Glu) to glutamate 1-semialdehyde (GSA). This Priestia megaterium (Bacillus megaterium) protein is Glutamyl-tRNA reductase.